Here is a 95-residue protein sequence, read N- to C-terminus: uncharacterized protein (95 aa).

The first 21 residues, 1 to 21, serve as a signal peptide directing secretion; the sequence is MKKITLFFTALLCLFSTSVLA.

This is an uncharacterized protein from Haemophilus influenzae (strain ATCC 51907 / DSM 11121 / KW20 / Rd).